The chain runs to 297 residues: Lymphocyte antigen 6 complex locus protein G6f (297 aa).

A signal peptide spans 1-16 (MAVLFLLLFLCGTPQA). An Ig-like V-type domain is found at 17-122 (ADNMQAIYVA…HNYQNWRVYD (106 aa)). The Extracellular segment spans residues 17-235 (ADNMQAIYVA…APSTGWDMPW (219 aa)). A disulfide bridge connects residues Cys35 and Cys106. An N-linked (GlcNAc...) asparagine glycan is attached at Asn88. A helical membrane pass occupies residues 236–256 (ILMLLLTMGQGVVILALSIVL). Residues 257-297 (WRQRVRGAPGRDASIPQFKPEIQVYENIHLARLGPPAHKPR) lie on the Cytoplasmic side of the membrane. The residue at position 281 (Tyr281) is a Phosphotyrosine.

In terms of assembly, homodimer; disulfide-linked. Interacts with GRB2 and GRB7 in a phosphorylation-dependent manner. In terms of processing, N-glycosylated.

The protein resides in the cell membrane. Functionally, may play a role in the downstream signal transduction pathways involving GRB2 and GRB7. This is Lymphocyte antigen 6 complex locus protein G6f (LY6G6F) from Homo sapiens (Human).